The following is an 86-amino-acid chain: Large ribosomal subunit protein bL27 (86 aa).

A compositionally biased stretch (gly residues) spans 1–10; sequence MAQKKGGGST. The interval 1–21 is disordered; it reads MAQKKGGGSTRNGRDSESKRL.

The protein belongs to the bacterial ribosomal protein bL27 family.

The chain is Large ribosomal subunit protein bL27 from Ralstonia pickettii (strain 12J).